The primary structure comprises 412 residues: Light-independent protochlorophyllide reductase subunit N (412 aa).

Cysteine 17, cysteine 42, and cysteine 103 together coordinate [4Fe-4S] cluster.

It belongs to the BchN/ChlN family. Protochlorophyllide reductase is composed of three subunits; ChlL, ChlN and ChlB. Forms a heterotetramer of two ChlB and two ChlN subunits. [4Fe-4S] cluster is required as a cofactor.

It catalyses the reaction chlorophyllide a + oxidized 2[4Fe-4S]-[ferredoxin] + 2 ADP + 2 phosphate = protochlorophyllide a + reduced 2[4Fe-4S]-[ferredoxin] + 2 ATP + 2 H2O. It participates in porphyrin-containing compound metabolism; chlorophyll biosynthesis (light-independent). Functionally, component of the dark-operative protochlorophyllide reductase (DPOR) that uses Mg-ATP and reduced ferredoxin to reduce ring D of protochlorophyllide (Pchlide) to form chlorophyllide a (Chlide). This reaction is light-independent. The NB-protein (ChlN-ChlB) is the catalytic component of the complex. This is Light-independent protochlorophyllide reductase subunit N from Synechococcus sp. (strain CC9902).